A 346-amino-acid chain; its full sequence is MSDRNPLIDADRRADEDNTLRPQTLDDFVGQAAARANLKVFIEAAKVRGEALDHVLFVGPPGLGKTTLAQIMAKELGVNFRSTSGPVIAKAGDLAALLTNLEERDVLFIDEIHRLSPAVEEILYPAMEDFQLDLIIGEGPAARSVKIDLAKFTLVAATTRLGLLTTPLRDRFGIPVRLNFYTVEELEYIVRRGARIMQMGISSDGAREVARRSRGTPRIAGRLLRRVRDFALVAGADIIDRRIADEALSRLEVDNRGLDQLDRRYLNIIARNFGGGPVGIETIAAGLSEPRDAIEDIIEPYLIQQGFLQRTPRGRVLTAVAWQHLGLPAPAEIIQQSQYGLFMEDE.

Residues 1 to 181 (MSDRNPLIDA…FGIPVRLNFY (181 aa)) form a large ATPase domain (RuvB-L) region. Residues leucine 20, arginine 21, glycine 62, lysine 65, threonine 66, threonine 67, 128 to 130 (EDF), arginine 171, tyrosine 181, and arginine 218 contribute to the ATP site. Threonine 66 contacts Mg(2+). The small ATPAse domain (RuvB-S) stretch occupies residues 182 to 252 (TVEELEYIVR…IADEALSRLE (71 aa)). The head domain (RuvB-H) stretch occupies residues 255–346 (NRGLDQLDRR…SQYGLFMEDE (92 aa)). DNA contacts are provided by arginine 291, arginine 310, and arginine 315.

It belongs to the RuvB family. Homohexamer. Forms an RuvA(8)-RuvB(12)-Holliday junction (HJ) complex. HJ DNA is sandwiched between 2 RuvA tetramers; dsDNA enters through RuvA and exits via RuvB. An RuvB hexamer assembles on each DNA strand where it exits the tetramer. Each RuvB hexamer is contacted by two RuvA subunits (via domain III) on 2 adjacent RuvB subunits; this complex drives branch migration. In the full resolvosome a probable DNA-RuvA(4)-RuvB(12)-RuvC(2) complex forms which resolves the HJ.

The protein localises to the cytoplasm. It carries out the reaction ATP + H2O = ADP + phosphate + H(+). Its function is as follows. The RuvA-RuvB-RuvC complex processes Holliday junction (HJ) DNA during genetic recombination and DNA repair, while the RuvA-RuvB complex plays an important role in the rescue of blocked DNA replication forks via replication fork reversal (RFR). RuvA specifically binds to HJ cruciform DNA, conferring on it an open structure. The RuvB hexamer acts as an ATP-dependent pump, pulling dsDNA into and through the RuvAB complex. RuvB forms 2 homohexamers on either side of HJ DNA bound by 1 or 2 RuvA tetramers; 4 subunits per hexamer contact DNA at a time. Coordinated motions by a converter formed by DNA-disengaged RuvB subunits stimulates ATP hydrolysis and nucleotide exchange. Immobilization of the converter enables RuvB to convert the ATP-contained energy into a lever motion, pulling 2 nucleotides of DNA out of the RuvA tetramer per ATP hydrolyzed, thus driving DNA branch migration. The RuvB motors rotate together with the DNA substrate, which together with the progressing nucleotide cycle form the mechanistic basis for DNA recombination by continuous HJ branch migration. Branch migration allows RuvC to scan DNA until it finds its consensus sequence, where it cleaves and resolves cruciform DNA. The protein is Holliday junction branch migration complex subunit RuvB of Brucella suis (strain ATCC 23445 / NCTC 10510).